Consider the following 230-residue polypeptide: MDLKYLNQKEAIDVDQELFTEYKFSVDQLMELAGLSCAHAVAKCFPAEKHPRILVCCGPGNNGGDGLVAARHLSLMGYTPTIYYPKPTAKPLFENLSHQCQMMGICGVKECPSVESAAANYDLILDALFGFSFKPPVRADFVAVVELMQQTKLPIASVDIPSGWDVEKGKLTECDVEPALLISLTAPKLCARQFRGEHHYLGGRFVPPALQRKYELNLPVYPGNELCVKL.

In terms of domain architecture, YjeF N-terminal spans 11 to 218 (AIDVDQELFT…ALQRKYELNL (208 aa)). 61-65 (NNGGD) is a (6S)-NADPHX binding site. K(+)-binding residues include Asn-62 and Asp-126. Residues 130-136 (GFSFKPP) and Asp-159 contribute to the (6S)-NADPHX site. Ser-162 provides a ligand contact to K(+).

It belongs to the NnrE/AIBP family. K(+) serves as cofactor.

It catalyses the reaction (6R)-NADHX = (6S)-NADHX. The enzyme catalyses (6R)-NADPHX = (6S)-NADPHX. Catalyzes the epimerization of the S- and R-forms of NAD(P)HX, a damaged form of NAD(P)H that is a result of enzymatic or heat-dependent hydration. This is a prerequisite for the S-specific NAD(P)H-hydrate dehydratase to allow the repair of both epimers of NAD(P)HX. The sequence is that of NAD(P)H-hydrate epimerase from Drosophila erecta (Fruit fly).